The chain runs to 576 residues: G protein-coupled receptor kinase 6 (576 aa).

The N-terminal stretch occupies residues 1 to 185; that stretch reads MELENIVANT…LERQPVTKNT (185 aa). Residues 53-171 form the RGS domain; it reads YHSLCERQPI…LDSIYFNRFL (119 aa). A Protein kinase domain is found at 186 to 448; that stretch reads FRQYRVLGKG…AREVKEHPLF (263 aa). ATP contacts are provided by residues 192-200, Lys-215, and 264-270; these read LGKGGFGEV and TLMNGGD. Asp-311 functions as the Proton acceptor in the catalytic mechanism. 315-318 is an ATP binding site; sequence ENIL. The region spanning 449–514 is the AGC-kinase C-terminal domain; it reads KKLNFKRLGA…GSVSIPWQNE (66 aa). Residue Ser-484 is modified to Phosphoserine. Thr-485 bears the Phosphothreonine mark. 3 S-palmitoyl cysteine lipidation sites follow: Cys-561, Cys-562, and Cys-565. A phosphoserine mark is found at Ser-566 and Ser-568.

It belongs to the protein kinase superfamily. AGC Ser/Thr protein kinase family. GPRK subfamily. Interacts with GIT1. In terms of tissue distribution, expressed in the brain in striatal neurons.

The protein localises to the membrane. The enzyme catalyses [G-protein-coupled receptor] + ATP = [G-protein-coupled receptor]-phosphate + ADP + H(+). In terms of biological role, specifically phosphorylates the activated forms of G protein-coupled receptors. Such receptor phosphorylation initiates beta-arrestin-mediated receptor desensitization, internalization, and signaling events leading to their desensitization. Seems to be involved in the desensitization of D2-like dopamine receptors in striatum and chemokine receptor CXCR4 which is critical for CXCL12-induced cell chemotaxis. Phosphorylates rhodopsin (RHO) (in vitro) and a non G-protein-coupled receptor, LRP6 during Wnt signaling (in vitro). The sequence is that of G protein-coupled receptor kinase 6 (Grk6) from Mus musculus (Mouse).